Consider the following 114-residue polypeptide: MAFQQHGNQEVRNRKILQGLEEKKRQMMNQQQGGGAGPLPGPSHVARPPTDAGNTSASRIHEPIVRYPNQTHQLAISQRQALEHAHSVSPGFYITQDSMYGNLILPVIPRVESE.

Residues 1–10 (MAFQQHGNQE) are compositionally biased toward polar residues. Residues 1 to 61 (MAFQQHGNQE…AGNTSASRIH (61 aa)) are disordered.

This sequence belongs to the SOSS-C family.

The sequence is that of SOSS complex subunit C homolog from Nematostella vectensis (Starlet sea anemone).